The chain runs to 145 residues: D-aminoacyl-tRNA deacylase (145 aa).

The short motif at 133 to 134 (GP) is the Gly-cisPro motif, important for rejection of L-amino acids element.

This sequence belongs to the DTD family. As to quaternary structure, homodimer.

It is found in the cytoplasm. The catalysed reaction is glycyl-tRNA(Ala) + H2O = tRNA(Ala) + glycine + H(+). It catalyses the reaction a D-aminoacyl-tRNA + H2O = a tRNA + a D-alpha-amino acid + H(+). An aminoacyl-tRNA editing enzyme that deacylates mischarged D-aminoacyl-tRNAs. Also deacylates mischarged glycyl-tRNA(Ala), protecting cells against glycine mischarging by AlaRS. Acts via tRNA-based rather than protein-based catalysis; rejects L-amino acids rather than detecting D-amino acids in the active site. By recycling D-aminoacyl-tRNA to D-amino acids and free tRNA molecules, this enzyme counteracts the toxicity associated with the formation of D-aminoacyl-tRNA entities in vivo and helps enforce protein L-homochirality. The chain is D-aminoacyl-tRNA deacylase from Cutibacterium acnes (strain DSM 16379 / KPA171202) (Propionibacterium acnes).